Here is a 447-residue protein sequence, read N- to C-terminus: QLKGMISVGPWGGQGGDHWSFKANHAITEILIHVKDNIKSISFKDASGDISGTFGGKDPRENEKGDEKKIGIHWPTEYLKSISGSYGDYNGLLVIRSLSFITNLTTYGSFGSTSGGESFSIPIADSVVVGFHGRGGYYLDALGVFVKPVPHGTISFGPWGGPAGDDAFNFKVGSWIKDIIIYSNGAIQSIAFKDGNGHCYGKFGGKDPNDIGVEKKVEIDGNLEHLTSISGTYGNYKGFEVVTSLSFITNVTKHGPFGTASGTSFSIPIEGSLVTGFHGKGGYYLDSIGIYVKPRDVEGSISIGPWGGSGGDPWSYTANEGINQIIIYAGSDIKSLAFKDTSGFDSATFGGVNPKDTGEKNTVSINWPSEYLTSISGTYGQYKFKDVFTTITSLSFTTNLATYGPFGKASGTSFSVPINNNTVLGFHGRAGDYLDAIGIFVKPDTAV.

3 Jacalin-type lectin domains span residues 5–148 (MISV…FVKP), 153–294 (TISF…YVKP), and 300–443 (SISI…FVKP).

It belongs to the jacalin lectin family. As to expression, expressed in seeds (at protein level).

With respect to regulation, hemagglutinating activity is slightly inhibited by alpha-methyl-D-mannopyranoside. D-mannose/D-glucose-binding lectin that also binds derivatives N-acetyl-D-glucosamine and alpha-methyl-D-mannopyranoside. Does not bind D-galactose, L-Rhamnose, D-fructose, lactose or glycoproteins fetiun and mucin. Shows agglutinating activity towards human and rabbit erythrocytes. Also displays antimicrobial activity against L.infantum. The protein is Mannose/glucose-specific lectin of Parkia pendula (Inga pendula).